The primary structure comprises 393 residues: S-adenosylmethionine synthase (393 aa).

Glu9 provides a ligand contact to Mg(2+). Position 15 (His15) interacts with ATP. Residue Glu43 coordinates K(+). Glu56 and Gln99 together coordinate L-methionine. Residues 167–169 (DGK), 235–238 (SGRF), Asp246, 252–253 (RK), Ala269, Lys273, and Lys277 contribute to the ATP site. L-methionine is bound at residue Asp246. L-methionine is bound at residue Lys277.

This sequence belongs to the AdoMet synthase family. As to quaternary structure, homotetramer. It depends on Mn(2+) as a cofactor. Mg(2+) is required as a cofactor. The cofactor is Co(2+). K(+) serves as cofactor.

Its subcellular location is the cytoplasm. It catalyses the reaction L-methionine + ATP + H2O = S-adenosyl-L-methionine + phosphate + diphosphate. The protein operates within amino-acid biosynthesis; S-adenosyl-L-methionine biosynthesis; S-adenosyl-L-methionine from L-methionine: step 1/1. In terms of biological role, catalyzes the formation of S-adenosylmethionine from methionine and ATP. The reaction comprises two steps that are both catalyzed by the same enzyme: formation of S-adenosylmethionine (AdoMet) and triphosphate, and subsequent hydrolysis of the triphosphate. This chain is S-adenosylmethionine synthase (SAMS), found in Litchi chinensis (Lychee).